A 1888-amino-acid chain; its full sequence is Eukaryotic translation initiation factor 4G (1888 aa).

Disordered stretches follow at residues 1-259, 391-420, 449-662, 726-761, 838-903, 961-1042, 1083-1138, 1331-1356, 1462-1605, and 1639-1691; these read MSFN…PTTP, FDNKQSNAYADTGTSGPRPPYNLPSQTQPL, PLPS…SLQH, VAHSSSPENPGLGNVKNLDLISDDNQDTSSKEKNSE, ADVS…DGEV, AYKR…SGDR, TNVS…DPRL, GEREQEEANKVEEEGEVKQSEEEREE, KWQQ…PGDL, and RFAG…PSLP. Polar residues-rich tracts occupy residues 13 to 36 and 75 to 84; these read GYTQYRKSGRSNNFNPQRGSSGTH and VNSTDSSNAP. The segment covering 171-183 has biased composition (basic and acidic residues); that stretch reads DEQKRDQARHESF. A compositionally biased stretch (pro residues) spans 185 to 195; sequence PVPPMPIPLAP. Composition is skewed to polar residues over residues 211–231, 244–259, 393–405, and 458–475; these read NVGQQLQQKDTGIINQPNTGD, ASPNHPTNQTQKPTTP, NKQSNAYADTGTS, and NSQPHRFNYPVSQGSQNV. A compositionally biased stretch (basic and acidic residues) spans 497–506; the sequence is PNREHTRDTH. Over residues 586–596 the composition is skewed to polar residues; the sequence is IKSSPVISKQF. Over residues 603 to 630 the composition is skewed to low complexity; it reads VSLESQDSSSVQSSLTASSEESELAVAH. Residues 631–645 show a composition bias toward basic and acidic residues; that stretch reads SEVRRENLLGSDLHK. The span at 840–850 shows a compositional bias: low complexity; the sequence is VSASVSSSSTV. A compositionally biased stretch (polar residues) spans 869-885; the sequence is NMSSNEVLKNVVKSDQP. Residues 963–983 are compositionally biased toward basic and acidic residues; sequence KRPEEKKETVAHSESIERTES. The tract at residues 1048 to 1093 is EIF4E-binding; that stretch reads KKYSRDFLLKFAEQFLDLPHNFEVTSDIESLMSTHTNVSHHHDRDP. The segment covering 1109–1124 has biased composition (basic and acidic residues); that stretch reads RLDRRGSNLVDDDRWS. One can recognise an MIF4G domain in the interval 1239–1462; the sequence is QRQLKAILNK…KDAIDLRKNK (224 aa). 2 stretches are compositionally biased toward basic and acidic residues: residues 1467–1484 and 1661–1674; these read RKVEGPKKIEEVHRDAAQ and KDLRHSGRSFDRSR. The 125-residue stretch at 1700-1824 folds into the MI domain; the sequence is RLQQLSLTAI…SLREVADLIC (125 aa).

The protein belongs to the eukaryotic initiation factor 4G family. As to quaternary structure, EIF4F is a multi-subunit complex, the composition of which varies with external and internal environmental conditions. It is composed of at least EIF4A, EIF4E and EIF4G. Interacts directly with eIF4E. In higher plants two isoforms of EIF4F have been identified, named isoform EIF4F and isoform EIF(iso)4F. Isoform EIF4F has subunits p220 and p26, whereas isoform EIF(iso)4F has subunits p82 and p28.

In terms of biological role, component of the protein complex eIF4F, which is involved in the recognition of the mRNA cap, ATP-dependent unwinding of 5'-terminal secondary structure and recruitment of mRNA to the ribosome. The polypeptide is Eukaryotic translation initiation factor 4G (Cucumis melo (Muskmelon)).